The primary structure comprises 315 residues: Protein LST8 homolog (315 aa).

WD repeat units follow at residues 1 to 31 (MGDQ…KTMR), 33 to 71 (VETS…TAPV), 76 to 115 (GVQK…PHCS), 119 to 158 (DCES…HECI), 161 to 200 (EVDA…DQKM), 211 to 250 (AHTR…KWRE), 253 to 292 (IENY…PTRE), and 295 to 315 (GHTK…KVNH).

It belongs to the WD repeat LST8 family.

The protein localises to the cytoplasm. In Drosophila pseudoobscura pseudoobscura (Fruit fly), this protein is Protein LST8 homolog.